Reading from the N-terminus, the 77-residue chain is Acyl carrier protein (77 aa).

In terms of domain architecture, Carrier spans 1–76 (MAVFDDVRDV…DVVNYIEKLG (76 aa)). Serine 36 is modified (O-(pantetheine 4'-phosphoryl)serine).

This sequence belongs to the acyl carrier protein (ACP) family. In terms of processing, 4'-phosphopantetheine is transferred from CoA to a specific serine of apo-ACP by AcpS. This modification is essential for activity because fatty acids are bound in thioester linkage to the sulfhydryl of the prosthetic group.

It is found in the cytoplasm. It participates in lipid metabolism; fatty acid biosynthesis. Functionally, carrier of the growing fatty acid chain in fatty acid biosynthesis. The polypeptide is Acyl carrier protein (Campylobacter curvus (strain 525.92)).